Consider the following 1405-residue polypeptide: DNA-directed RNA polymerase subunit beta' (1405 aa).

Residues Cys-70, Cys-72, Cys-85, and Cys-88 each coordinate Zn(2+). 3 residues coordinate Mg(2+): Asp-460, Asp-462, and Asp-464. Residues Cys-815, Cys-890, Cys-897, and Cys-900 each coordinate Zn(2+).

It belongs to the RNA polymerase beta' chain family. The RNAP catalytic core consists of 2 alpha, 1 beta, 1 beta' and 1 omega subunit. When a sigma factor is associated with the core the holoenzyme is formed, which can initiate transcription. Mg(2+) is required as a cofactor. Zn(2+) serves as cofactor.

It carries out the reaction RNA(n) + a ribonucleoside 5'-triphosphate = RNA(n+1) + diphosphate. In terms of biological role, DNA-dependent RNA polymerase catalyzes the transcription of DNA into RNA using the four ribonucleoside triphosphates as substrates. This chain is DNA-directed RNA polymerase subunit beta', found in Xanthomonas campestris pv. campestris (strain 8004).